The chain runs to 350 residues: tRNA uridine(34) hydroxylase (350 aa).

The region spanning 146 to 240 is the Rhodanese domain; the sequence is DDPDALFIDM…YARKAREQGL (95 aa). Cys-200 functions as the Cysteine persulfide intermediate in the catalytic mechanism.

It belongs to the TrhO family.

It carries out the reaction uridine(34) in tRNA + AH2 + O2 = 5-hydroxyuridine(34) in tRNA + A + H2O. Its function is as follows. Catalyzes oxygen-dependent 5-hydroxyuridine (ho5U) modification at position 34 in tRNAs, the first step in 5-carboxymethoxyuridine (cmo5U) biosynthesis. May be part of an alternate pathway, which is able to bypass cmo5U biogenesis in a subset of tRNAs under aerobic conditions. The chain is tRNA uridine(34) hydroxylase from Escherichia coli (strain SE11).